A 490-amino-acid chain; its full sequence is MSRMAEQQLYIHGGYTSATSGRTFETINPANGNVLATVQAAGREDVDRAVKSAQQGQKIWAAMTAMERSRILRRAVDILRERNDELAKLETLDTGKAYSETSTVDIVTGADVLEYYAGLIPALEGSQIPLRETSFVYTRREPLGVVAGIGAWNYPIQIALWKSAPALAAGNAMIFKPSEVTPLTALKLAEIYSEAGLPDGVFNVLPGVGAETGQYLTEHPGIAKVSFTGGVASGKKVMANSAASSLKEVTMELGGKSPLIVFDDADLDLAADIAMMANFFSSGQVCTNGTRVFVPAKCKAAFEQKILARVERIRAGDVFDPQTNFGPLVSFPHRDNVLRYIAKGKEEGARVLCGGDVLKGDGFDNGAWVAPTVFTDCRDEMTIVREEIFGPVMSLLTYESEDEVIRRANDTDYGLAAGIVTADLNLAHRVIHQLEAGICWINTWGESPAEMPVGGYKHSGIGRENGVMTLQSYTQVKSIQVEMAKFQSIF.

Residues threonine 26, isoleucine 27, and aspartate 93 each contribute to the K(+) site. An NAD(+)-binding site is contributed by 150 to 152 (GAW). The active-site Charge relay system is lysine 162. 176 to 179 (KPSE) serves as a coordination point for NAD(+). Valine 180 contributes to the K(+) binding site. 230–233 (GVAS) lines the NAD(+) pocket. Leucine 246 is a binding site for K(+). Glutamate 252 (proton acceptor) is an active-site residue. Residues glycine 254, cysteine 286, and glutamate 387 each coordinate NAD(+). Cysteine 286 functions as the Nucleophile in the catalytic mechanism. At cysteine 286 the chain carries Cysteine sulfenic acid (-SOH). K(+)-binding residues include lysine 457 and glycine 460. Glutamate 464 serves as the catalytic Charge relay system.

The protein belongs to the aldehyde dehydrogenase family. As to quaternary structure, dimer of dimers. K(+) serves as cofactor.

The enzyme catalyses betaine aldehyde + NAD(+) + H2O = glycine betaine + NADH + 2 H(+). It functions in the pathway amine and polyamine biosynthesis; betaine biosynthesis via choline pathway; betaine from betaine aldehyde: step 1/1. Its function is as follows. Involved in the biosynthesis of the osmoprotectant glycine betaine. Catalyzes the irreversible oxidation of betaine aldehyde to the corresponding acid. The polypeptide is Betaine aldehyde dehydrogenase (Escherichia coli (strain SMS-3-5 / SECEC)).